A 137-amino-acid polypeptide reads, in one-letter code: Large ribosomal subunit protein uL16 (137 aa).

The protein belongs to the universal ribosomal protein uL16 family. In terms of assembly, part of the 50S ribosomal subunit.

Its function is as follows. Binds 23S rRNA and is also seen to make contacts with the A and possibly P site tRNAs. This is Large ribosomal subunit protein uL16 from Xylella fastidiosa (strain M23).